A 235-amino-acid polypeptide reads, in one-letter code: Phosphoribosylaminoimidazole-succinocarboxamide synthase (235 aa).

It belongs to the SAICAR synthetase family.

The catalysed reaction is 5-amino-1-(5-phospho-D-ribosyl)imidazole-4-carboxylate + L-aspartate + ATP = (2S)-2-[5-amino-1-(5-phospho-beta-D-ribosyl)imidazole-4-carboxamido]succinate + ADP + phosphate + 2 H(+). Its pathway is purine metabolism; IMP biosynthesis via de novo pathway; 5-amino-1-(5-phospho-D-ribosyl)imidazole-4-carboxamide from 5-amino-1-(5-phospho-D-ribosyl)imidazole-4-carboxylate: step 1/2. The sequence is that of Phosphoribosylaminoimidazole-succinocarboxamide synthase from Exiguobacterium sibiricum (strain DSM 17290 / CCUG 55495 / CIP 109462 / JCM 13490 / 255-15).